Reading from the N-terminus, the 339-residue chain is Ketol-acid reductoisomerase (NADP(+)) (339 aa).

The 182-residue stretch at 1–182 folds into the KARI N-terminal Rossmann domain; the sequence is MRVYYDRDAD…GGGRAGIIET (182 aa). NADP(+) contacts are provided by residues 24-27, Arg-48, Ser-51, Ser-53, and 83-86; these read YGSQ and DELQ. His-108 is an active-site residue. Residue Gly-134 participates in NADP(+) binding. The region spanning 183–328 is the KARI C-terminal knotted domain; the sequence is TFKEECETDL…ERLRAMMPWI (146 aa). Mg(2+)-binding residues include Asp-191, Glu-195, Glu-227, and Glu-231. Position 252 (Ser-252) interacts with substrate.

Belongs to the ketol-acid reductoisomerase family. Mg(2+) is required as a cofactor.

It carries out the reaction (2R)-2,3-dihydroxy-3-methylbutanoate + NADP(+) = (2S)-2-acetolactate + NADPH + H(+). It catalyses the reaction (2R,3R)-2,3-dihydroxy-3-methylpentanoate + NADP(+) = (S)-2-ethyl-2-hydroxy-3-oxobutanoate + NADPH + H(+). Its pathway is amino-acid biosynthesis; L-isoleucine biosynthesis; L-isoleucine from 2-oxobutanoate: step 2/4. The protein operates within amino-acid biosynthesis; L-valine biosynthesis; L-valine from pyruvate: step 2/4. Its function is as follows. Involved in the biosynthesis of branched-chain amino acids (BCAA). Catalyzes an alkyl-migration followed by a ketol-acid reduction of (S)-2-acetolactate (S2AL) to yield (R)-2,3-dihydroxy-isovalerate. In the isomerase reaction, S2AL is rearranged via a Mg-dependent methyl migration to produce 3-hydroxy-3-methyl-2-ketobutyrate (HMKB). In the reductase reaction, this 2-ketoacid undergoes a metal-dependent reduction by NADPH to yield (R)-2,3-dihydroxy-isovalerate. This is Ketol-acid reductoisomerase (NADP(+)) from Methylobacterium nodulans (strain LMG 21967 / CNCM I-2342 / ORS 2060).